The sequence spans 315 residues: N-acetyl-gamma-glutamyl-phosphate reductase (315 aa).

Cys-117 is an active-site residue.

It belongs to the NAGSA dehydrogenase family. Type 2 subfamily.

It is found in the cytoplasm. The catalysed reaction is N-acetyl-L-glutamate 5-semialdehyde + phosphate + NADP(+) = N-acetyl-L-glutamyl 5-phosphate + NADPH + H(+). Its pathway is amino-acid biosynthesis; L-arginine biosynthesis; N(2)-acetyl-L-ornithine from L-glutamate: step 3/4. Functionally, catalyzes the NADPH-dependent reduction of N-acetyl-5-glutamyl phosphate to yield N-acetyl-L-glutamate 5-semialdehyde. In Burkholderia lata (strain ATCC 17760 / DSM 23089 / LMG 22485 / NCIMB 9086 / R18194 / 383), this protein is N-acetyl-gamma-glutamyl-phosphate reductase.